The primary structure comprises 149 residues: Calmodulin-like protein 3 (149 aa).

EF-hand domains lie at 8 to 43 (EQIA…LGQN), 44 to 79 (PTEA…KMKD), 81 to 116 (DSEE…LGEK), and 117 to 149 (LSDE…LVSK). 19 residues coordinate Ca(2+): D21, D23, D25, S27, E32, D57, D59, N61, T63, E68, D94, D96, N98, E105, D130, D132, D134, Q136, and E141.

Belongs to the calmodulin family. In terms of assembly, interacts with MYO10, the interaction is calcium-dependent and essential for MYO10 function in filopodial extension.

Its function is as follows. May function as a specific light chain of unconventional myosin-10 (MYO10), also enhances MYO10 translation, possibly by acting as a chaperone for the emerging MYO10 heavy chain protein. May compete with calmodulin by binding, with different affinities, to cellular substrates. This Mus musculus (Mouse) protein is Calmodulin-like protein 3 (Calml3).